We begin with the raw amino-acid sequence, 163 residues long: Phosphopantetheine adenylyltransferase (163 aa).

Serine 9 is a substrate binding site. ATP contacts are provided by residues 9-10 and histidine 17; that span reads SF. 3 residues coordinate substrate: lysine 41, leucine 73, and lysine 87. ATP-binding positions include 88–90, glutamate 98, and 124–130; these read GLR and YTYVSST.

Belongs to the bacterial CoaD family. As to quaternary structure, homohexamer. Requires Mg(2+) as cofactor.

It is found in the cytoplasm. The enzyme catalyses (R)-4'-phosphopantetheine + ATP + H(+) = 3'-dephospho-CoA + diphosphate. It participates in cofactor biosynthesis; coenzyme A biosynthesis; CoA from (R)-pantothenate: step 4/5. Its function is as follows. Reversibly transfers an adenylyl group from ATP to 4'-phosphopantetheine, yielding dephospho-CoA (dPCoA) and pyrophosphate. In Fusobacterium nucleatum subsp. nucleatum (strain ATCC 25586 / DSM 15643 / BCRC 10681 / CIP 101130 / JCM 8532 / KCTC 2640 / LMG 13131 / VPI 4355), this protein is Phosphopantetheine adenylyltransferase.